The sequence spans 650 residues: Macrolide export ATP-binding/permease protein MacB (650 aa).

Positions 5–243 constitute an ABC transporter domain; the sequence is LELKDIRRSY…AGGTEPVVNT (239 aa). Residue 41-48 coordinates ATP; the sequence is GASGSGKS. 5 helical membrane passes run 273–293, 523–543, 554–574, 580–600, and 613–633; these read LLTM…VVVG, LFLT…VMNI, ANDI…HLFF, VLPA…AFTL, and PLAL…FGWL.

Belongs to the ABC transporter superfamily. Macrolide exporter (TC 3.A.1.122) family. Homodimer. Part of the tripartite efflux system MacAB-TolC, which is composed of an inner membrane transporter, MacB, a periplasmic membrane fusion protein, MacA, and an outer membrane component, TolC. The complex forms a large protein conduit and can translocate molecules across both the inner and outer membranes. Interacts with MacA.

The protein localises to the cell inner membrane. Part of the tripartite efflux system MacAB-TolC. MacB is a non-canonical ABC transporter that contains transmembrane domains (TMD), which form a pore in the inner membrane, and an ATP-binding domain (NBD), which is responsible for energy generation. Confers resistance against macrolides. The chain is Macrolide export ATP-binding/permease protein MacB from Shigella dysenteriae serotype 1 (strain Sd197).